Here is a 304-residue protein sequence, read N- to C-terminus: N-acetylmuramic acid 6-phosphate etherase (304 aa).

Phosphoserine is present on serine 2. Positions 59-222 constitute an SIS domain; the sequence is AYESFQNGGR…STAVMVKIGK (164 aa). Glutamate 87 (proton donor) is an active-site residue. Glutamate 118 is an active-site residue.

Belongs to the GCKR-like family. MurNAc-6-P etherase subfamily. In terms of assembly, homodimer.

The enzyme catalyses N-acetyl-D-muramate 6-phosphate + H2O = N-acetyl-D-glucosamine 6-phosphate + (R)-lactate. Its pathway is amino-sugar metabolism; N-acetylmuramate degradation. Functionally, specifically catalyzes the cleavage of the D-lactyl ether substituent of MurNAc 6-phosphate, producing GlcNAc 6-phosphate and D-lactate. This chain is N-acetylmuramic acid 6-phosphate etherase, found in Bacillus subtilis (strain 168).